A 30-amino-acid chain; its full sequence is Cycloviolacin-O2 (30 aa).

The cyclopeptide (Gly-Asn) cross-link spans 1–30; sequence GIPCGESCVWIPCISSAIGCSCKSKVCYRN. 3 cysteine pairs are disulfide-bonded: C4–C20, C8–C22, and C13–C27.

In terms of processing, this is a cyclic peptide.

Functionally, probably participates in a plant defense mechanism. The sequence is that of Cycloviolacin-O2 from Viola biflora (Yellow wood violet).